Reading from the N-terminus, the 1473-residue chain is MSVKASINNSQEAVSRIAFRCSDALYVVHPNNSILNGALTESLKDLKKFETLNVSGKVPHVLPLKSHADPFAHIADAILAEEEVASTQPKQITSVVASADALFFATPHLYKLAHEPLVAHVAIESTEAFDFASVRDTGFVILFSGNRPGDSSEAALEDTLETASLAHRLALKLNTGVLHFYSPVYDTTAALENIETLPSKEDAQHARVAHIPIEEKQEDSEKEGNIKEAFVPPKFDQPERDAATSEYLESLSIKPFEYSGSDDATDVLLVFGSAASELAKAAVTSSVAVAIVRVLRPWLPSKLQEVLPTSTKRLTVLEPITSLPRKWDPLYLDVLSSFVASGSSIELFAVRYGLSSSEQATEIIKAVRDNLSGALKPSLVCDFTDGVSQVFVPTPPSIEEAYHKLLHRVFKSRLNIVNDPASSATKQNIPSRLIISPQFALGSVLEYENQRRAFCDEVATLLKEKNSSVSSESLEVLSNWIVSVDNLESPVDPELVISELKKDSSAPIKSLLDRSEFFTNVSHWIIGSDAWAYDLGNSALHQVLCLEKNVNLLIVDTQPYSTREAVRSSSRKKDIGLYAMNFGNAYVASTALYSSYTQLISALLEADKFKGPSVVLAYLPYHSADDDAITVLQETKKAVDIGYWPLYRWTPALEDGEYSDFKLDSERIRRELKTFLERDNYLTQLTLRVPSLARTLTQSFGAEVRHQQNVDSRNALNKLIEGLSGPPLTILFASDGGTAENVAKRLQNRASARGSKCKIMAMDDFPIEELGNEKNVVVLVSTAGQGEFPQNGREFWEAIKGADLNLSELKYGVFGFGDYEYWPRKEDKIYYNRPGKQLDARFVELGAAPLVTLGLGNDQDPDGWETAYNLWEPELWKALGLDNVEIDIDEPKPITNEDIKQASNFLRGTIFEGLADESTGALAESDCQLTKFHGIYMQDDRDIRDERKKQGLEPAYGFMIRARMPAGVCTPEQWIAMDDISTKWGNHTLKITTRQTFQWHGVLKKNLRNTIRNIVKVFLTTLGACGDVARNVTCSSTPNNETIHDQLFAVSKQISNELLPTTSSYHEIWIEDPETVEKRKVAGEAVQDVEPLYGPTYLPRKFKVGVAAPPYNDVDVYTNDVALIAIIENDKVLGFNVGIGGGMGTTHNNKKTYPRLATVVGYVLTDKIMEVVKAILIVQRDNGDRENRKHARLKYTVDTLGVSTFVEKVEEVLGYKFEEARDHPQFIKNHDDFEGWHKTEKNKYWRSIFVENGRIENNGILQFKTGLRELAERLYTEKSEAEFRLTANQHVILFNVAENELGWINEHMAKYKLDNNAFSGLRLSSAACVALPTCGLAMAESERYLPKLITKVEEIVYEAGLQKDSIVMRMTGCPNGCSRPWVAEIACVGKAPNTYNLMLGGGFYGQRLNKLYRSSVQEKEILNLLRPLIKRYALEREDGEHFGDWVIRAGIITAVENGGANGAVHEGVSPEAF.

Residues 728-876 (LTILFASDGG…AYNLWEPELW (149 aa)) form the Flavodoxin-like domain. Residues Cys-1328, Cys-1334, Cys-1373, and Cys-1377 each contribute to the [4Fe-4S] cluster site. Cys-1377 contacts siroheme.

Belongs to the nitrite and sulfite reductase 4Fe-4S domain family. Alpha(2)-beta(2). The alpha component is a flavoprotein, the beta component is a hemoprotein. The cofactor is siroheme. It depends on [4Fe-4S] cluster as a cofactor.

The protein resides in the cytoplasm. It catalyses the reaction hydrogen sulfide + 3 NADP(+) + 3 H2O = sulfite + 3 NADPH + 4 H(+). The protein operates within sulfur metabolism; hydrogen sulfide biosynthesis; hydrogen sulfide from sulfite (NADPH route): step 1/1. Catalyzes the reduction of sulfite to sulfide, one of several activities required for the biosynthesis of L-cysteine from sulfate. This chain is Sulfite reductase [NADPH] subunit beta (sir1), found in Schizosaccharomyces pombe (strain 972 / ATCC 24843) (Fission yeast).